An 831-amino-acid polypeptide reads, in one-letter code: Multiphosphoryl transfer protein (831 aa).

In terms of domain architecture, HPr spans M1–S90. H15 (pros-phosphohistidine intermediate; for HPr activity) is an active-site residue. H15 carries the phosphohistidine; by EI modification. The tract at residues G119–D650 is PTS EI. H298 (tele-phosphohistidine intermediate; for PTS EI activity) is an active-site residue. H298 carries the post-translational modification Phosphohistidine; by autocatalysis. Residues R405 and R441 each coordinate phosphoenolpyruvate. Residues E540 and D564 each contribute to the Mg(2+) site. Phosphoenolpyruvate-binding positions include N563–D564 and R574. The Proton donor; for EI activity role is filled by C611. Residues P685–E828 enclose the PTS EIIA type-2 domain. H747 (tele-phosphohistidine intermediate; for PTS EIIA activity) is an active-site residue. H747 is modified (phosphohistidine; by HPr).

This sequence belongs to the PEP-utilizing enzyme family. It depends on Mg(2+) as a cofactor.

Its subcellular location is the cytoplasm. It carries out the reaction L-histidyl-[protein] + phosphoenolpyruvate = N(pros)-phospho-L-histidyl-[protein] + pyruvate. The catalysed reaction is D-fructose(out) + N(pros)-phospho-L-histidyl-[protein] = D-fructose 1-phosphate(in) + L-histidyl-[protein]. Its function is as follows. Multifunctional protein that includes general (non sugar-specific) and sugar-specific components of the phosphoenolpyruvate-dependent sugar phosphotransferase system (sugar PTS). This major carbohydrate active transport system catalyzes the phosphorylation of incoming sugar substrates concomitantly with their translocation across the cell membrane. The enzyme II FryABC PTS system is involved in fructose transport. The protein is Multiphosphoryl transfer protein (fryA) of Shigella flexneri.